A 97-amino-acid polypeptide reads, in one-letter code: YcgL domain-containing protein Psyr_1564 (97 aa).

Residues 3–87 (RICSIYRSPK…AEDDYIEHLP (85 aa)) enclose the YcgL domain.

The chain is YcgL domain-containing protein Psyr_1564 from Pseudomonas syringae pv. syringae (strain B728a).